The sequence spans 275 residues: Rhamnulose-1-phosphate aldolase (275 aa).

Residue E117 is part of the active site. Residues H141, H143, and H212 each contribute to the Zn(2+) site.

The protein belongs to the aldolase class II family. RhaD subfamily. In terms of assembly, homotetramer. Zn(2+) is required as a cofactor.

Its subcellular location is the cytoplasm. The catalysed reaction is L-rhamnulose 1-phosphate = (S)-lactaldehyde + dihydroxyacetone phosphate. It participates in carbohydrate degradation; L-rhamnose degradation; glycerone phosphate from L-rhamnose: step 3/3. Its function is as follows. Catalyzes the reversible cleavage of L-rhamnulose-1-phosphate to dihydroxyacetone phosphate (DHAP) and L-lactaldehyde. In Citrobacter koseri (strain ATCC BAA-895 / CDC 4225-83 / SGSC4696), this protein is Rhamnulose-1-phosphate aldolase.